The primary structure comprises 473 residues: Photosystem II CP43 reaction center protein (473 aa).

Residues 1 to 14 (MKTLYSLRRFYHVE) constitute a propeptide that is removed on maturation. The residue at position 15 (T15) is an N-acetylthreonine. Phosphothreonine is present on T15. 5 consecutive transmembrane segments (helical) span residues 69–93 (LFEVAHFVPEKPMYEQGLILLPHLA), 134–155 (LLGPETLEESFPFFGYVWKDRN), 178–200 (KALYFGGVYDTWAPGGGDVRKIT), 255–275 (KPFAWARRALVWSGEAYLSYS), and 291–312 (WFNNTAYPSEFYGPTGPEASQA). A [CaMn4O5] cluster-binding site is contributed by E367. A helical membrane pass occupies residues 447–471 (RARAAAAGFEKGIDRDFEPVLSMTP).

The protein belongs to the PsbB/PsbC family. PsbC subfamily. In terms of assembly, PSII is composed of 1 copy each of membrane proteins PsbA, PsbB, PsbC, PsbD, PsbE, PsbF, PsbH, PsbI, PsbJ, PsbK, PsbL, PsbM, PsbT, PsbX, PsbY, PsbZ, Psb30/Ycf12, at least 3 peripheral proteins of the oxygen-evolving complex and a large number of cofactors. It forms dimeric complexes. Binds multiple chlorophylls and provides some of the ligands for the Ca-4Mn-5O cluster of the oxygen-evolving complex. It may also provide a ligand for a Cl- that is required for oxygen evolution. PSII binds additional chlorophylls, carotenoids and specific lipids. is required as a cofactor.

Its subcellular location is the plastid. It localises to the chloroplast thylakoid membrane. Functionally, one of the components of the core complex of photosystem II (PSII). It binds chlorophyll and helps catalyze the primary light-induced photochemical processes of PSII. PSII is a light-driven water:plastoquinone oxidoreductase, using light energy to abstract electrons from H(2)O, generating O(2) and a proton gradient subsequently used for ATP formation. This is Photosystem II CP43 reaction center protein from Nicotiana tabacum (Common tobacco).